Consider the following 259-residue polypeptide: Ribose-5-phosphate isomerase (259 aa).

This sequence belongs to the ribose 5-phosphate isomerase family.

The protein localises to the cytoplasm. It carries out the reaction aldehydo-D-ribose 5-phosphate = D-ribulose 5-phosphate. Its pathway is carbohydrate degradation; pentose phosphate pathway; D-ribose 5-phosphate from D-ribulose 5-phosphate (non-oxidative stage): step 1/1. The polypeptide is Ribose-5-phosphate isomerase (RKI1) (Vanderwaltozyma polyspora (strain ATCC 22028 / DSM 70294 / BCRC 21397 / CBS 2163 / NBRC 10782 / NRRL Y-8283 / UCD 57-17) (Kluyveromyces polysporus)).